The chain runs to 133 residues: Phosphoribosyl-AMP cyclohydrolase (133 aa).

Asp-82 is a Mg(2+) binding site. Zn(2+) is bound at residue Cys-83. Mg(2+) is bound by residues Asp-84 and Asp-86. Cys-100 and Cys-107 together coordinate Zn(2+).

Belongs to the PRA-CH family. As to quaternary structure, homodimer. The cofactor is Mg(2+). Zn(2+) is required as a cofactor.

The protein localises to the cytoplasm. It carries out the reaction 1-(5-phospho-beta-D-ribosyl)-5'-AMP + H2O = 1-(5-phospho-beta-D-ribosyl)-5-[(5-phospho-beta-D-ribosylamino)methylideneamino]imidazole-4-carboxamide. Its pathway is amino-acid biosynthesis; L-histidine biosynthesis; L-histidine from 5-phospho-alpha-D-ribose 1-diphosphate: step 3/9. In terms of biological role, catalyzes the hydrolysis of the adenine ring of phosphoribosyl-AMP. This is Phosphoribosyl-AMP cyclohydrolase from Aromatoleum aromaticum (strain DSM 19018 / LMG 30748 / EbN1) (Azoarcus sp. (strain EbN1)).